The chain runs to 2144 residues: Reducing polyketide synthase PKS2 (2144 aa).

The 427-residue stretch at 10–436 (PMPLAIIGMS…GSNSHCIVRA (427 aa)) folds into the Ketosynthase family 3 (KS3) domain. Active-site for beta-ketoacyl synthase activity residues include cysteine 183, histidine 319, and histidine 360. The tract at residues 538–855 (VFAFTGQGAQ…VPSLHRGQNA (318 aa)) is malonyl-CoA:ACP transacylase (MAT). Positions 924–1058 (HDLLGSINSS…ALVKCEATTD (135 aa)) are N-terminal hotdog fold. The interval 924-1214 (HDLLGSINSS…RSYSIDGTTD (291 aa)) is dehydratase (DH) domain. The PKS/mFAS DH domain occupies 924–1237 (HDLLGSINSS…LAVEATLAPQ (314 aa)). A C-terminal hotdog fold region spans residues 1076–1237 (HSCVGSPLLY…LAVEATLAPQ (162 aa)). Residues 1461–1747 (GMPDSLYLQR…SETDSKKLLL (287 aa)) are enoyl reductase (ER) domain. The tract at residues 1771–1948 (AVYLLVGGSG…PATSLALTAV (178 aa)) is ketoreductase (KR) domain. Residues 2059-2136 (EATQLLLAAI…KIVDSVIVKR (78 aa)) form the Carrier domain. Serine 2096 is subject to O-(pantetheine 4'-phosphoryl)serine.

It functions in the pathway mycotoxin biosynthesis. Its function is as follows. Reducing polyketide synthase (PKS); part of the Tox1A locus, one of the 2 loci that mediate the biosynthesis of T-toxin, a family of linear polyketides 37 to 45 carbons in length, of which the major component is 41 carbons, and which leads to high virulence to maize. One of the PKSs (PKS1 or PKS2) could synthesize a precursor, used subsequently by the other PKS as starter unit, to add additional carbons. Variability in the length of the final carbon backbone C35-47 could be achieved by varying the number of condensation cycles, or use of different starter or extender units or might be due to decarboxylation of the penultimate product, catalyzed by DEC1. Additional proteins are required for the biosynthesis of T-toxin, including oxidoreductases RED1, RED2, RED3, LAM1 and OXI1, as well as esterase TOX9. The chain is Reducing polyketide synthase PKS2 from Cochliobolus heterostrophus (strain C4 / ATCC 48331 / race T) (Southern corn leaf blight fungus).